Consider the following 242-residue polypeptide: Anti-Pycsar protein Apyc1 (242 aa).

The interval 17-216 is beta-lactamase-like; the sequence is FNNNALIEQD…EMQSIIKLMH (200 aa). The Zn(2+) site is built by H59, H61, D63, H64, H142, D162, and H216.

The protein belongs to the anti-Pycsar protein Apyc1 family. As to quaternary structure, homodimer. The cofactor is Zn(2+).

The enzyme catalyses 3',5'-cyclic CMP + H2O = CMP + H(+). The catalysed reaction is 3',5'-cyclic UMP + H2O = UMP + H(+). Functionally, counteracts the endogenous Pycsar antiviral defense system. Phosphodiesterase that enables metal-dependent hydrolysis of host cyclic nucleotide Pycsar defense signals such as cCMP and cUMP. The sequence is that of Anti-Pycsar protein Apyc1 from Saccharibacillus brassicae.